A 231-amino-acid chain; its full sequence is Cytochrome c oxidase assembly factor 7 (231 aa).

Sel1-like repeat units follow at residues 34 to 66 (PDGC…DQNE), 68 to 104 (SESC…NKGG), 108 to 145 (IDSC…DGNF), 146 to 182 (AASC…SLGH), and 183 to 218 (MWGC…DLHR).

The protein belongs to the hcp beta-lactamase family.

It localises to the mitochondrion intermembrane space. Its function is as follows. May be required for assembly of mitochondrial respiratory chain complexes. The protein is Cytochrome c oxidase assembly factor 7 (coa7) of Xenopus tropicalis (Western clawed frog).